The sequence spans 1143 residues: MSDAEGQGFVHLRVRSAYSLLEGAIKADQIGKLAAEAKMPAAGLADRANLFGALEYSSYAKDAGVQPIIGCAIPVVGIGGGPTERWARAPTLMLLAQNERGYLNLSELSSIAYLDSAELPEPVVPWAKVAEHSEGLILLSGGTDGPVDALFAAGKTAEASAALAEMHRVFGDRFYVELQRHGLPRQAAAEPGLVNWAYDHDVPLVATNDVYFAKPGFYDAHDALLCISDGAFVGQDERRRVTPEHWFKPAEEMRKLFADLPEACDNTLDIARRCAFMVHKRDPILPSFPTGDGRNEAEELEHQAREGLKMRLEGLTLSAPEEEYWKRLDFELGIIKKMGFPGYFLIVSDFIKWGKAHGIPVGPGRGSGAGSLVAWVLTITDLDPLRFGLLFERFLNPERVSMPDFDVDFCQERREEVISYVQEKYGRDRVAQIITFGSLQARAVLRDVGRVMQLPLGLVDRLCKMVPNNPAAPVTLAQAIDLEPRLKQAKKEDANVSACLDVALQLEGLFRNASTHAAGLVIGDRPLTQLTPLYKDPRSDLPATQFNMKWVESAGLVKFDFLGLKTLTVLDRAVKHLKKRGFEIDLGKLPFDDAKTYELLASGQTVGVFQLESQGMRDTLRKMRCGSIEEITALISLYRPGPMDNIDTFVDCKFGRKPVDTLHPSLEAVLKETYGVIVYQEQVMQIAQILAGYSLGEADLLRRAMGKKKKEEMDLQKIRFVSGAKEKNVPEEQSGSIFELVAKFAGYGFNKSHAAAYAFISYQTAWLKANTPVEFFAASMSLDLSNTDKLAVFHQDARRFGITVRAPDVNRSGADFEVENGEVLYALGAIRNVGLEAMKHLVAVRAEGGPFRDVFDFVERIDPRQVNKRAIENLARAGAFDSIHKNRAQIVASADVLIAHAQSCHADRQGGQGGLFGSDPGAGRPRLSKTENWNQVDLLDEELSAVGFYLTGHPLEDMVGMLRRRRTVMLAEAMAQAEAGAEAFRMCGVVRRRQERASQSGEKFAFVSLSDPTGEYEVLYPPESLRKCRDVLEPGKAVAIKVRAKARDGEVRFFGDDAEPIEKAVENVVAGLRVHLSPSAAEIDALKRRLEPAQAQKGGEVTFVAAIGGGREIELRLPGRYTLDAALRGALKTAPGVALLEDV.

Belongs to the DNA polymerase type-C family. DnaE subfamily. As to quaternary structure, DNA polymerase III contains a core (composed of alpha, epsilon and theta chains) that associates with a tau subunit. This core dimerizes to form the PolIII' complex. PolIII' associates with the gamma complex (composed of gamma, delta, delta', psi and chi chains) and with the beta chain to form the complete DNA polymerase III complex.

It localises to the cytoplasm. The enzyme catalyses DNA(n) + a 2'-deoxyribonucleoside 5'-triphosphate = DNA(n+1) + diphosphate. In terms of biological role, DNA polymerase III is a complex, multichain enzyme responsible for most of the replicative synthesis in bacteria. This DNA polymerase also exhibits 3' to 5' exonuclease activity. The alpha chain is the DNA polymerase. This Caulobacter vibrioides (strain NA1000 / CB15N) (Caulobacter crescentus) protein is DNA polymerase III subunit alpha (dnaE1).